Reading from the N-terminus, the 189-residue chain is Probable RNA 2'-phosphotransferase (189 aa).

Belongs to the KptA/TPT1 family.

Functionally, removes the 2'-phosphate from RNA via an intermediate in which the phosphate is ADP-ribosylated by NAD followed by a presumed transesterification to release the RNA and generate ADP-ribose 1''-2''-cyclic phosphate (APPR&gt;P). May function as an ADP-ribosylase. This Streptomyces griseus subsp. griseus (strain JCM 4626 / CBS 651.72 / NBRC 13350 / KCC S-0626 / ISP 5235) protein is Probable RNA 2'-phosphotransferase.